The primary structure comprises 135 residues: Retinol-binding protein 1 (135 aa).

Residues 22-32 (RALDVNVALRK) are important for interaction with STRA6. Lysine 41, methionine 63, and glutamine 109 together coordinate all-trans-retinol.

Belongs to the calycin superfamily. Fatty-acid binding protein (FABP) family. Interacts (only as retinol-free apoprotein) with STRA6.

It localises to the cytoplasm. The protein localises to the lipid droplet. Functionally, cytoplasmic retinol-binding protein. Accepts retinol from the transport protein STRA6, and thereby contributes to retinol uptake, storage and retinoid homeostasis. In Mus musculus (Mouse), this protein is Retinol-binding protein 1 (Rbp1).